The sequence spans 182 residues: NADH-quinone oxidoreductase subunit B (182 aa).

The [4Fe-4S] cluster site is built by Cys46, Cys47, Cys112, and Cys141.

The protein belongs to the complex I 20 kDa subunit family. In terms of assembly, NDH-1 is composed of 14 different subunits. Subunits NuoB, C, D, E, F, and G constitute the peripheral sector of the complex. [4Fe-4S] cluster is required as a cofactor.

It is found in the cell inner membrane. The catalysed reaction is a quinone + NADH + 5 H(+)(in) = a quinol + NAD(+) + 4 H(+)(out). NDH-1 shuttles electrons from NADH, via FMN and iron-sulfur (Fe-S) centers, to quinones in the respiratory chain. The immediate electron acceptor for the enzyme in this species is believed to be a menaquinone. Couples the redox reaction to proton translocation (for every two electrons transferred, four hydrogen ions are translocated across the cytoplasmic membrane), and thus conserves the redox energy in a proton gradient. This chain is NADH-quinone oxidoreductase subunit B, found in Flavobacterium johnsoniae (strain ATCC 17061 / DSM 2064 / JCM 8514 / BCRC 14874 / CCUG 350202 / NBRC 14942 / NCIMB 11054 / UW101) (Cytophaga johnsonae).